The following is a 704-amino-acid chain: MVSPTKMIIRSPLKETDTNLKHNNGIAASTTAAGHLNVFSNDNNCNNNNTTESFPKKRSLERLELQQQQHLHEKKRARIERARSIEGAVQVSKGTGLKNVEPRVTPKELLEWQTNWKKIMKRDSRIYFDITDDVEMNTYNKSKMDKRRDLLKRGFLTLGAQITQFFDTTVTIVITRRSVENIYLLKDTDILSRAKKNYMKVWSYEKAARFLKNLDVDLDHLSKTKSASLAAPTLSNLLHNEKLYGPTDRDPRTKRDDIHYFKYPHVYLYDLWQTWAPIITLEWKPQELTNLDELPYPILKIGSFGRCPFIGDRNYDESSYKRVVKRYSRDKANKKYALQLRALFQYHADTLLNTSSVNDQTKNLIFIPHTCNDSTKSFKKWMQEKAKNFEKTELKKTDDSAVQDVRNEHADQTDEKNSILLNETETKEPPLKEEKENKQSIAEESNKYPQRKELAATPKLNHPVLATFARQETEEVPDDLCTLKTKSRQAFEIKASGAHQSNDVATSFGNGLGPTRASVMSKNMKSLSRLMVDRKLGVKQTNGNNKNYTATIATTAETSKENRHRLDFNALKKDEAPSKETGKDSAVHLETNRKPQNFPKVATKSVSADSKVHNDIKITTTESPTASKKSTSTNVTLHFNAQTAQTAQPVKKETVKNSGYCENCRVKYESLEQHIVSEKHLSFAENDLNFEAIDSLIENLRFQI.

A d box 1 region spans residues 10–19 (RSPLKETDTN). S59 is modified (phosphoserine). A d box 2 region spans residues 62–70 (RLELQQQQH). Residues 83–88 (RSIEGA) carry the POLO box domain (PBD)-binding motif. 2 positions are modified to phosphoserine: S84 and S235. Basic and acidic residues-rich tracts occupy residues 397–417 (TDDSAVQDVRNEHADQTDEKN), 424–438 (TETKEPPLKEEKENK), and 444–453 (ESNKYPQRKE). The tract at residues 397–453 (TDDSAVQDVRNEHADQTDEKNSILLNETETKEPPLKEEKENKQSIAEESNKYPQRKE) is disordered. S623 is subject to Phosphoserine. Residues 654 to 703 (TVKNSGYCENCRVKYESLEQHIVSEKHLSFAENDLNFEAIDSLIENLRFQ) form a DBF4-type zinc finger. C661, C664, H674, and H680 together coordinate Zn(2+).

In terms of assembly, heterodimer with CDC7 to form the DBF4-dependent kinase (DDK) complex. Interacts (via PBD-binding motif) with CDC5 (via POLO box domains). Interacts (via N-terminus) with ORC2, ORC3 and RAD53. Binds to ARS1 origin DNA. Phosphorylated by CDC7 and by CDC5.

Regulatory subunit of the CDC7-DBF4 kinase, also called DBF4-dependent kinase (DDK), which is involved in cell cycle regulation of premitotic and premeiotic chromosome replication and in chromosome segregation. DDK plays an essential role in initiating DNA replication at replication origins by phosphorylating the MCM2 and MCM4 subunits of the MCM2-7 helicase complex. DBF4 recruits the catalytic subunit CDC7 to MCM2 and to origins of replication. DDK also has postreplicative functions in meiosis. DDK phosphorylates the meiosis-specific double-strand break protein MER2 for initiation of meiotic recombination. Interacts with CDC5 during meiosis to promote double-strand breaks and monopolar spindle orientation. Inhibits CDC5 activity during mitosis through direct binding to its PBD. This chain is DDK kinase regulatory subunit DBF4 (DBF4), found in Saccharomyces cerevisiae (strain ATCC 204508 / S288c) (Baker's yeast).